The following is a 705-amino-acid chain: GATOR2 complex protein WDR24 (705 aa).

6 WD repeats span residues 1 to 28 (MDEN…RNKQ), 34 to 74 (EHKR…SVST), 77 to 117 (GQSE…RYER), 121 to 161 (AHNG…AKEI), 165 to 207 (QTIA…IPSA), and 211 to 254 (EHKD…IDRA). Residues 633-655 (NCSNCKRPMSNRGWICDRCRQCA) form a C4-type zinc finger. Zn(2+) is bound by residues Cys634, Cys637, Cys648, Cys651, Cys658, Cys661, Cys672, Cys675, His677, His680, His683, Cys694, Cys698, His700, and Cys702. An RING-type; atypical zinc finger spans residues 656 to 705 (SMCAVCHHVVKGLFVWCQGCSHGGHLQHIMKWLETSSHCPAGCGHLCEYT).

This sequence belongs to the WD repeat WDR24 family. As to quaternary structure, component of the GATOR2 subcomplex, composed of MIOS, SEC13, SEH1L, WDR24 and WDR59. The GATOR2 complex interacts with CASTOR1 and CASTOR2; the interaction is negatively regulated by arginine. The GATOR2 complex interacts with SESN1, SESN2 and SESN3; the interaction is negatively regulated by amino acids.

It is found in the lysosome membrane. The enzyme catalyses S-ubiquitinyl-[E2 ubiquitin-conjugating enzyme]-L-cysteine + [acceptor protein]-L-lysine = [E2 ubiquitin-conjugating enzyme]-L-cysteine + N(6)-ubiquitinyl-[acceptor protein]-L-lysine.. Its pathway is protein modification; protein ubiquitination. With respect to regulation, the GATOR2 complex is negatively regulated by the upstream amino acid sensors CASTOR1 and SESN2, which sequester the GATOR2 complex in absence of amino acids. In the presence of abundant amino acids, GATOR2 is released from CASTOR1 and SESN2 and activated. Catalytic component of the GATOR2 complex, a multiprotein complex that acts as an activator of the amino acid-sensing branch of the mTORC1 signaling pathway. The GATOR2 complex indirectly activates mTORC1 through the inhibition of the GATOR1 subcomplex. GATOR2 probably acts as an E3 ubiquitin-protein ligase toward GATOR1. In the presence of abundant amino acids, the GATOR2 complex mediates ubiquitination of the NPRL2 core component of the GATOR1 complex, leading to GATOR1 inactivation. In the absence of amino acids, GATOR2 is inhibited, activating the GATOR1 complex. In addition to its role in regulation of the mTORC1 complex, promotes the acidification of lysosomes and facilitates autophagic flux. Within the GATOR2 complex, WDR24 constitutes the catalytic subunit that mediates 'Lys-6'-linked ubiquitination of NPRL2. The polypeptide is GATOR2 complex protein WDR24 (Gallus gallus (Chicken)).